A 326-amino-acid polypeptide reads, in one-letter code: Interleukin-1-binding protein (326 aa).

Positions 1-18 (MSIPPVIFLPIFFYSSFV) are cleaved as a signal peptide. Ig-like C2-type domains follow at residues 24–115 (PECI…LNLT), 122–208 (SNID…YDVT), and 221–322 (PPTM…KTVT). The cysteines at positions 48 and 99 are disulfide-linked. 3 N-linked (GlcNAc...) asparagine; by host glycosylation sites follow: Asn80, Asn103, and Asn113. A disulfide bridge connects residues Cys143 and Cys194. Asn237 carries N-linked (GlcNAc...) asparagine; by host glycosylation. Cys242 and Cys309 form a disulfide bridge.

Belongs to the interleukin-1 receptor family. Interacts with mouse Il1b.

The protein localises to the secreted. May reduce the host inflammatory response by interacting with inteleukin-1 beta (Il1b) and thus decreasing the association between IL1B and its cellular receptor. The polypeptide is Interleukin-1-binding protein (OPG201) (Bos taurus (Bovine)).